A 209-amino-acid chain; its full sequence is Uridine kinase (209 aa).

An ATP-binding site is contributed by 12–19 (GGSGGGKT).

This sequence belongs to the uridine kinase family.

The protein resides in the cytoplasm. It carries out the reaction uridine + ATP = UMP + ADP + H(+). It catalyses the reaction cytidine + ATP = CMP + ADP + H(+). It functions in the pathway pyrimidine metabolism; CTP biosynthesis via salvage pathway; CTP from cytidine: step 1/3. The protein operates within pyrimidine metabolism; UMP biosynthesis via salvage pathway; UMP from uridine: step 1/1. The chain is Uridine kinase from Streptococcus agalactiae serotype III (strain NEM316).